The chain runs to 280 residues: Mediator of RNA polymerase II transcription subunit 2 (280 aa).

The interval 212–247 (GLQNTSGGNEKKNDPQINFNDTNAPPSAVNVPENGN) is disordered. Positions 226 to 236 (PQINFNDTNAP) are enriched in polar residues.

It belongs to the Mediator complex subunit 2 family. In terms of assembly, component of the Mediator complex.

The protein resides in the nucleus. Its function is as follows. Component of the Mediator complex, a coactivator involved in the regulated transcription of nearly all RNA polymerase II-dependent genes. Mediator functions as a bridge to convey information from gene-specific regulatory proteins to the basal RNA polymerase II transcription machinery. Mediator is recruited to promoters by direct interactions with regulatory proteins and serves as a scaffold for the assembly of a functional preinitiation complex with RNA polymerase II and the general transcription factors. This chain is Mediator of RNA polymerase II transcription subunit 2 (MED2), found in Kluyveromyces lactis (strain ATCC 8585 / CBS 2359 / DSM 70799 / NBRC 1267 / NRRL Y-1140 / WM37) (Yeast).